We begin with the raw amino-acid sequence, 199 residues long: NADH-quinone oxidoreductase subunit C (199 aa).

Belongs to the complex I 30 kDa subunit family. NDH-1 is composed of 14 different subunits. Subunits NuoB, C, D, E, F, and G constitute the peripheral sector of the complex.

Its subcellular location is the cell inner membrane. The enzyme catalyses a quinone + NADH + 5 H(+)(in) = a quinol + NAD(+) + 4 H(+)(out). In terms of biological role, NDH-1 shuttles electrons from NADH, via FMN and iron-sulfur (Fe-S) centers, to quinones in the respiratory chain. The immediate electron acceptor for the enzyme in this species is believed to be ubiquinone. Couples the redox reaction to proton translocation (for every two electrons transferred, four hydrogen ions are translocated across the cytoplasmic membrane), and thus conserves the redox energy in a proton gradient. This Cupriavidus metallidurans (strain ATCC 43123 / DSM 2839 / NBRC 102507 / CH34) (Ralstonia metallidurans) protein is NADH-quinone oxidoreductase subunit C.